The following is a 278-amino-acid chain: Ras-related protein Rab-40B (278 aa).

GTP-binding residues include serine 23, glycine 26, and lysine 27. Residues 41–49 (SPYGHPAGI) are switch-I. Aspartate 69 contributes to the Mg(2+) binding site. Residues glycine 72, asparagine 126, and arginine 127 each coordinate GTP. The interval 72-88 (GQGRFCTIFRSYSRGAQ) is switch-II. Residues 175 to 228 (LLRHGMDRLWRPSKVLSLQELCCRAVVSCTPGHLVDKLPLPVALRSHLKSFSMA) form the SOCS box domain. Residues 245–278 (ANSSHKRNSFRKVRTIRPPQSPPRNCARNSCKIS) are disordered. Residues 248–259 (SHKRNSFRKVRT) show a composition bias toward basic residues. Cysteine 270 is lipidated: S-palmitoyl cysteine. Cysteine 275 is lipidated: S-geranylgeranyl cysteine.

Belongs to the small GTPase superfamily. Rab family. As to quaternary structure, component of the cullin-5-RING E3 ubiquitin-protein ligase complex (ECS(RAB40B) complex) composed of CUL5, Elongin BC (ELOB and ELOC), RNF7/RBX2 and RAB40B; RAB40B interaction with ECS complex is GTP-independent. Binds (GTP-bound) LIMA1; interaction promotes LIMA1 subcellular localization in lamellipodia during cell migration. Interacts (GTP-bound) with TKS5/SH3PXD2A (via PX domain); interaction promotes invadopodia-mediated extracellular matrix degradation. Mg(2+) serves as cofactor.

The protein localises to the cell membrane. It is found in the cytoplasm. The protein resides in the cytosol. Its subcellular location is the cell projection. It localises to the lamellipodium membrane. The protein localises to the ruffle. It carries out the reaction GTP + H2O = GDP + phosphate + H(+). Its pathway is protein modification; protein ubiquitination. Its activity is regulated as follows. Regulated by guanine nucleotide exchange factors (GEFs) which promote the exchange of bound GDP for free GTP. Regulated by GTPase activating proteins (GAPs) which increase the GTP hydrolysis activity. Inhibited by GDP dissociation inhibitors (GDIs). RAB40B small GTPase acts as substrate-recognition components of the ECS(RAB40B) E3 ubiquitin ligase complex which mediates the ubiquitination of target proteins. The Rab40 subfamily belongs to the Rab family that are key regulators of intracellular membrane trafficking, from the formation of transport vesicles to their fusion with membranes. Rabs cycle between an inactive GDP-bound form and an active GTP-bound form that is able to recruit to membranes different sets of downstream effectors directly responsible for vesicle formation, movement, tethering and fusion. As part of the ECS(RAB40B) complex, GTP-bound RAB40B promotes LIMA1/EPLIN ubiquitination and degradation, thereby regulating leading-edge actin dynamics during cell migration. As part of the ECS(RAB40B) complex, GTP-bound RAB40B also ubiquitinates RAP2A GTPase which promotes its localization to lamellipodia and activation to drive cell migration. The ECS(RAB40B) complex does not mediate canonical ubiquitin-dependent degradation of RAP2. RAB40B also binds TKS5/SH3PXD2A effector independently from ECS complex to promote invadopodia-mediated extracellular matrix degradation. In Mus musculus (Mouse), this protein is Ras-related protein Rab-40B.